The chain runs to 868 residues: DNA mismatch repair protein MutS (868 aa).

Position 620 to 627 (620 to 627 (GPNMGGKS)) interacts with ATP.

Belongs to the DNA mismatch repair MutS family.

In terms of biological role, this protein is involved in the repair of mismatches in DNA. It is possible that it carries out the mismatch recognition step. This protein has a weak ATPase activity. This is DNA mismatch repair protein MutS from Xylella fastidiosa (strain 9a5c).